We begin with the raw amino-acid sequence, 488 residues long: Tetratricopeptide repeat protein 23 (488 aa).

TPR repeat units lie at residues 45–78, 137–170, 186–219, 228–261, and 398–431; these read LHLC…TRIC, LELF…SKEM, SRIK…TEIT, VQVL…TPQP, and AETY…ETFL.

In terms of assembly, associated with the EvC complex composed of EFCAB7, IQCE, EVC2 and EVC.

Its subcellular location is the cell projection. The protein resides in the cilium. Participates positively in the ciliary Hedgehog (Hh) signaling. The polypeptide is Tetratricopeptide repeat protein 23 (Ttc23) (Mus musculus (Mouse)).